A 326-amino-acid chain; its full sequence is Type II methyltransferase M.CviAII (326 aa).

Belongs to the N(4)/N(6)-methyltransferase family.

The catalysed reaction is a 2'-deoxyadenosine in DNA + S-adenosyl-L-methionine = an N(6)-methyl-2'-deoxyadenosine in DNA + S-adenosyl-L-homocysteine + H(+). An alpha subtype methylase that recognizes the double-stranded sequence 5'-CATG-3', methylates A-2 on both strands and protects the DNA from cleavage by the CviAII endonuclease. The protein is Type II methyltransferase M.CviAII (CVIAIIM) of Paramecium bursaria Chlorella virus 1 (PBCV-1).